The sequence spans 152 residues: Putative toxin MJ1304 (152 aa).

Residues 15–135 form the HEPN domain; sequence IKRAEEDLEV…EECLKDAENV (121 aa).

In terms of biological role, putative toxin component of a putative type VII toxin-antitoxin (TA) system. Its cognate antitoxin might be MJ1305. This chain is Putative toxin MJ1304, found in Methanocaldococcus jannaschii (strain ATCC 43067 / DSM 2661 / JAL-1 / JCM 10045 / NBRC 100440) (Methanococcus jannaschii).